Consider the following 132-residue polypeptide: uncharacterized protein (132 aa).

The interval 68-91 (WSRTSPNSSRSSPRSPASMASTSS) is disordered.

This is an uncharacterized protein from Streptomyces cacaoi.